Here is a 246-residue protein sequence, read N- to C-terminus: 14-3-3 protein beta/alpha (246 aa).

M1 carries the N-acetylmethionine modification. T2 is subject to N-acetylthreonine; in 14-3-3 protein beta/alpha, N-terminally processed. Phosphothreonine is present on T2. K5 carries the post-translational modification N6-acetyllysine. The residue at position 51 (K51) is an N6-acetyllysine; alternate. K51 is covalently cross-linked (Glycyl lysine isopeptide (Lys-Gly) (interchain with G-Cter in SUMO2); alternate). Phosphoserine is present on S60. K70 is modified (N6-acetyllysine). Y84 and Y106 each carry 3'-nitrotyrosine. K117 is subject to N6-acetyllysine. Phosphoserine is present on residues S186 and S232.

Belongs to the 14-3-3 family. Homodimer. Interacts with SAMSN1 and PRKCE. Interacts with AKAP13. Interacts with SSH1 and TORC2/CRTC2. Interacts with ABL1; the interaction results in cytoplasmic location of ABL1 and inhibition of cABL-mediated apoptosis. Interacts with ROR2 (dimer); the interaction results in phosphorylation of YWHAB on tyrosine residues. Interacts with GAB2. Interacts with YAP1 (phosphorylated form). Interacts with the phosphorylated (by AKT1) form of SRPK2. Interacts with PKA-phosphorylated AANAT. Interacts with MYO1C. Interacts with SIRT2. Interacts with the 'Thr-369' phosphorylated form of DAPK2. Interacts with PI4KB, TBC1D22A and TBC1D22B. Interacts with the 'Ser-1134' and 'Ser-1161' phosphorylated form of SOS1. Interacts (via phosphorylated form) with YWHAB; this interaction occurs in a protein kinase AKT1-dependent manner. Interacts with SLITRK1. Interacts with SYNPO2 (phosphorylated form); YWHAB competes with ACTN2 for interaction with SYNPO2. Interacts with RIPOR2 (via phosphorylated form); this interaction occurs in a chemokine-dependent manner and does not compete for binding of RIPOR2 with RHOA nor blocks inhibition of RIPOR2-mediated RHOA activity. Interacts with MARK2 and MARK3. Interacts with TESK1; the interaction is dependent on the phosphorylation of TESK1 'Ser-439' and inhibits TESK1 kinase activity. Interacts with MEFV. Interacts with HDAC4. Interacts with ADAM22 (via C-terminus). The alpha, brain-specific form differs from the beta form in being phosphorylated. Phosphorylated on Ser-60 by protein kinase C delta type catalytic subunit in a sphingosine-dependent fashion. In terms of processing, isoform Short contains a N-acetylmethionine at position 1.

The protein localises to the cytoplasm. It is found in the melanosome. In terms of biological role, adapter protein implicated in the regulation of a large spectrum of both general and specialized signaling pathways. Binds to a large number of partners, usually by recognition of a phosphoserine or phosphothreonine motif. Binding generally results in the modulation of the activity of the binding partner. Negative regulator of osteogenesis. Blocks the nuclear translocation of the phosphorylated form (by AKT1) of SRPK2 and antagonizes its stimulatory effect on cyclin D1 expression resulting in blockage of neuronal apoptosis elicited by SRPK2. Negative regulator of signaling cascades that mediate activation of MAP kinases via AKAP13. The protein is 14-3-3 protein beta/alpha (Ywhab) of Rattus norvegicus (Rat).